A 490-amino-acid chain; its full sequence is Angiopoietin-related protein 1 (490 aa).

The N-terminal stretch at 1–22 (MKAFVWTLSVLLFLLGSGHCKG) is a signal peptide. A coiled-coil region spans residues 79–167 (ITRMDLENLK…LNVTTEMLKM (89 aa)). 2 N-linked (GlcNAc...) asparagine glycosylation sites follow: asparagine 159 and asparagine 187. In terms of domain architecture, Fibrinogen C-terminal spans 270–490 (FINEGPFKDC…AVQMMIKPID (221 aa)). 2 disulfides stabilise this stretch: cysteine 279–cysteine 308 and cysteine 431–cysteine 444.

The protein resides in the secreted. This chain is Angiopoietin-related protein 1 (Angptl1), found in Mus musculus (Mouse).